Consider the following 487-residue polypeptide: Protein DETOXIFICATION 11 (487 aa).

A run of 12 helical transmembrane segments spans residues L35–I55, F73–L93, L122–G142, A151–L171, L184–Y204, I211–F231, A264–L284, V293–A313, A330–G350, M377–V397, F412–L432, and V435–V455.

The protein belongs to the multi antimicrobial extrusion (MATE) (TC 2.A.66.1) family.

The protein resides in the membrane. This Arabidopsis thaliana (Mouse-ear cress) protein is Protein DETOXIFICATION 11.